Consider the following 99-residue polypeptide: Acylphosphatase (99 aa).

Residues 5–97 form the Acylphosphatase-like domain; it reads VRQVMIRGRV…RPGERFSQLP (93 aa). Active-site residues include Arg20 and Asn38.

Belongs to the acylphosphatase family.

The enzyme catalyses an acyl phosphate + H2O = a carboxylate + phosphate + H(+). This Nitrobacter winogradskyi (strain ATCC 25391 / DSM 10237 / CIP 104748 / NCIMB 11846 / Nb-255) protein is Acylphosphatase (acyP).